Consider the following 223-residue polypeptide: Small ribosomal subunit protein uS11m (223 aa).

The transit peptide at 1–38 (MVLKHSVTYNLSFFISFTFSSIFFSSLILFLVYKSVLS) directs the protein to the mitochondrion.

The protein belongs to the universal ribosomal protein uS11 family. As to quaternary structure, component of the mitochondrial small ribosomal subunit (mt-SSU). Mature yeast 74S mitochondrial ribosomes consist of a small (37S) and a large (54S) subunit. The 37S small subunit contains a 15S ribosomal RNA (15S mt-rRNA) and at least 32 different proteins. The 54S large subunit contains a 21S rRNA (21S mt-rRNA) and at least 45 different proteins.

Its subcellular location is the mitochondrion. Its function is as follows. Component of the mitochondrial ribosome (mitoribosome), a dedicated translation machinery responsible for the synthesis of mitochondrial genome-encoded proteins, including at least some of the essential transmembrane subunits of the mitochondrial respiratory chain. The mitoribosomes are attached to the mitochondrial inner membrane and translation products are cotranslationally integrated into the membrane. The polypeptide is Small ribosomal subunit protein uS11m (mrps18) (Schizosaccharomyces pombe (strain 972 / ATCC 24843) (Fission yeast)).